The sequence spans 93 residues: UPF0358 protein YlaN (93 aa).

The protein belongs to the UPF0358 family.

Its function is as follows. Essential for cell growth and for normal cell shape. The chain is UPF0358 protein YlaN (ylaN) from Bacillus subtilis (strain 168).